We begin with the raw amino-acid sequence, 254 residues long: Zinc import ATP-binding protein ZnuC (254 aa).

The ABC transporter domain maps to 5–219 (VELKEVCLSF…PEFARLFGRP (215 aa)). 37–44 (GPNGAGKS) contacts ATP. The span at 233 to 242 (CDGEHHHHEP) shows a compositional bias: basic and acidic residues. The disordered stretch occupies residues 233–254 (CDGEHHHHEPQVPVIRLPSRNQ).

This sequence belongs to the ABC transporter superfamily. Zinc importer (TC 3.A.1.15.5) family. In terms of assembly, the complex is composed of two ATP-binding proteins (ZnuC), two transmembrane proteins (ZnuB) and a solute-binding protein (ZnuA).

The protein localises to the cell inner membrane. It catalyses the reaction Zn(2+)(out) + ATP(in) + H2O(in) = Zn(2+)(in) + ADP(in) + phosphate(in) + H(+)(in). In terms of biological role, part of the ABC transporter complex ZnuABC involved in zinc import. Responsible for energy coupling to the transport system. The protein is Zinc import ATP-binding protein ZnuC of Aeromonas hydrophila subsp. hydrophila (strain ATCC 7966 / DSM 30187 / BCRC 13018 / CCUG 14551 / JCM 1027 / KCTC 2358 / NCIMB 9240 / NCTC 8049).